A 455-amino-acid chain; its full sequence is MTDLSKEELLQRIQQLENENEQLKAVALQSLHTLRYNQSCSHSLQQSNSVNEEPLSLEEFKRYGRQMIVPKFGSLNAQKKLRSSKILVVGAGGLGSPALQYLCAAGIGEIGIIDDDTVDVSNLHRQIIHKSSLVGILKCESAKQSMKDLNPFVKVETYPERLTVFNAFEIIDKYDLVLDCTDHPAVRYLINDVCVLLGKTIVSGSGLRAEGQLTILNYDQVGPCYRCFYPQAPEPSSITSCSDGGVIGPAIGLVGVAMAMETIKLLTGTYTRENFTPFLASYSAYPLQQMKTFKMRPKQSSCKVCGDRPEITKEMVENGSIDYVSFCGHIDEKNPPLQKKYRITVQEYSSLLNSQSREHTLIDVRPKEQFEITNLPGSINLDWPLVFSKCDNDKIDLLLPQDITKADQLYVICRFGNDSQLATAKLIEAGYLNAKDIIGGLNKWSEDIDAAFPKY.

Residues G93, D114, 121 to 125 (SNLHR), K138, and 182 to 183 (DH) contribute to the ATP site. Zn(2+)-binding residues include C224 and C227. C241 functions as the Glycyl thioester intermediate; for adenylyltransferase activity in the catalytic mechanism. The Zn(2+) site is built by C302 and C305. The 99-residue stretch at 355 to 453 (QSREHTLIDV…WSEDIDAAFP (99 aa)) folds into the Rhodanese domain. C413 (cysteine persulfide intermediate; for sulfurtransferase activity) is an active-site residue.

The protein in the N-terminal section; belongs to the HesA/MoeB/ThiF family. UBA4 subfamily. It depends on Zn(2+) as a cofactor.

The protein localises to the cytoplasm. It localises to the cytosol. Its pathway is tRNA modification; 5-methoxycarbonylmethyl-2-thiouridine-tRNA biosynthesis. Plays a central role in 2-thiolation of mcm(5)S(2)U at tRNA wobble positions of cytosolic tRNA(Lys), tRNA(Glu) and tRNA(Gln). Acts by mediating the C-terminal thiocarboxylation of sulfur carrier URM1. Its N-terminus first activates URM1 as acyl-adenylate (-COAMP), then the persulfide sulfur on the catalytic cysteine is transferred to URM1 to form thiocarboxylation (-COSH) of its C-terminus. The reaction probably involves hydrogen sulfide that is generated from the persulfide intermediate and that acts as a nucleophile towards URM1. Subsequently, a transient disulfide bond is formed. Does not use thiosulfate as sulfur donor; NFS1 probably acting as a sulfur donor for thiocarboxylation reactions. Prior mcm(5) tRNA modification by the elongator complex is required for 2-thiolation. May also be involved in protein urmylation. In Lodderomyces elongisporus (strain ATCC 11503 / CBS 2605 / JCM 1781 / NBRC 1676 / NRRL YB-4239) (Yeast), this protein is Adenylyltransferase and sulfurtransferase UBA4.